The chain runs to 421 residues: Putative leucine-rich repeat protein R380 (421 aa).

7 LRR repeats span residues Y48–P69, K70–P85, N89–K110, L111–P129, E130–P150, N151–I172, and E173–V191.

This is Putative leucine-rich repeat protein R380 from Acanthamoeba polyphaga (Amoeba).